The sequence spans 702 residues: MILTLSKTEMEVVRRVLGREPKEAEWKLVDALWSEHCSYKSSKVFLRSLPSTGPNVIMSVEDWQDAGAVDVGDGLALVLKVESHNHPSAIDPFNGAATGVGGILRDIISKGAKPIALLDMIRVGKLDDKGKWLLKNIISGIGFYGNSVGVPVVGGELSFDETYNDNPLVDVACAGIVSKDSIVPSVVREPGLRLVLAGFTGLDGLGGASFASRKLSGMDEIGAVQIADPFAGKIIIDVTLEIAKEVEAIKDLGGGGLAVAVTEMANGLGAVVNLERVPLRFEYLSPEDIIISETQERMLFAVKPEKVESVCAKFREYNYPCEDIGEITAEPKVRFLYNGEPVAELPSDLLLSPPLNVWPAERKPRKREPEREVALGEALRAVLTHPDLVSKEWAYSQFDYEVGTSTVVKPGQGDSAVVELPNGKYLALKGDANQDLCAEDAYECGKAIVAEAYRNLATVGARGIALVDHLQFGDPRKPHVYQDFIDAVRGISEASKFFSIPVVGGKVSFHNEDKNGNPIKPTPLVVMAGLVEGKLARNRVEEGDLVLIGETRNELAGTLFSRIFGGGGEVAKTRLMEDLIASNLVIKGINEGKITWNKDVSKGGLAGALLPILAKGFSVRISSSQVIGTSNLLGKMFSESGGRFLVLTSDPQWFMYQAGRMGIQALAIGKVTKDGSKLVLDYETFPMDSIVENYYSFLEGSL.

The active site involves His36. ATP-binding residues include Tyr39 and Lys80. Glu82 contacts Mg(2+). Residues 83 to 86 (SHNH) and Arg105 each bind substrate. His84 (proton acceptor) is an active-site residue. Asp106 contacts Mg(2+). Gln225 provides a ligand contact to substrate. Asp251 provides a ligand contact to Mg(2+). 293–295 (ETQ) serves as a coordination point for substrate. The ATP site is built by Asp468 and Gly505. Ser508 is a substrate binding site.

It belongs to the FGAMS family. In terms of assembly, monomer. Part of the FGAM synthase complex composed of 1 PurL, 1 PurQ and 2 PurS subunits.

It is found in the cytoplasm. It carries out the reaction N(2)-formyl-N(1)-(5-phospho-beta-D-ribosyl)glycinamide + L-glutamine + ATP + H2O = 2-formamido-N(1)-(5-O-phospho-beta-D-ribosyl)acetamidine + L-glutamate + ADP + phosphate + H(+). It participates in purine metabolism; IMP biosynthesis via de novo pathway; 5-amino-1-(5-phospho-D-ribosyl)imidazole from N(2)-formyl-N(1)-(5-phospho-D-ribosyl)glycinamide: step 1/2. Functionally, part of the phosphoribosylformylglycinamidine synthase complex involved in the purines biosynthetic pathway. Catalyzes the ATP-dependent conversion of formylglycinamide ribonucleotide (FGAR) and glutamine to yield formylglycinamidine ribonucleotide (FGAM) and glutamate. The FGAM synthase complex is composed of three subunits. PurQ produces an ammonia molecule by converting glutamine to glutamate. PurL transfers the ammonia molecule to FGAR to form FGAM in an ATP-dependent manner. PurS interacts with PurQ and PurL and is thought to assist in the transfer of the ammonia molecule from PurQ to PurL. The sequence is that of Phosphoribosylformylglycinamidine synthase subunit PurL from Metallosphaera sedula (strain ATCC 51363 / DSM 5348 / JCM 9185 / NBRC 15509 / TH2).